A 342-amino-acid polypeptide reads, in one-letter code: Alpha-tocopherol transfer protein-like (342 aa).

The segment at 1 to 31 is disordered; sequence MSEESDSLRTSPSVASLSENELPPPPEPPGY. Residues 8-19 show a composition bias toward polar residues; the sequence is LRTSPSVASLSE. One can recognise a CRAL-TRIO domain in the interval 117–282; sequence KPSALKDVLA…EYGGTAGELD (166 aa).

Its function is as follows. May act as a protein that binds a hydrophobic ligand. This chain is Alpha-tocopherol transfer protein-like (TTPAL), found in Pongo abelii (Sumatran orangutan).